A 201-amino-acid polypeptide reads, in one-letter code: Recombination protein RecR (201 aa).

A C4-type zinc finger spans residues 59 to 74 (CEICGNMDTENICRIC). In terms of domain architecture, Toprim spans 82–177 (SIIAIVETVA…KISRLASGIP (96 aa)).

This sequence belongs to the RecR family.

In terms of biological role, may play a role in DNA repair. It seems to be involved in an RecBC-independent recombinational process of DNA repair. It may act with RecF and RecO. This Rickettsia rickettsii (strain Iowa) protein is Recombination protein RecR.